A 774-amino-acid polypeptide reads, in one-letter code: Subtilisin-like protease SBT3.5 (774 aa).

The N-terminal stretch at M1 to A23 is a signal peptide. Positions S24–A108 are cleaved as a propeptide — removed in mature form. The region spanning V29–A108 is the Inhibitor I9 domain. One can recognise a Peptidase S8 domain in the interval T112–A621. N128 carries an N-linked (GlcNAc...) asparagine glycan. Residue D142 is the Charge relay system of the active site. N-linked (GlcNAc...) asparagine glycosylation occurs at N201. The active-site Charge relay system is the H217. N-linked (GlcNAc...) asparagine glycosylation is found at N232, N394, N409, and N539. Positions S383–I478 constitute a PA domain. S552 serves as the catalytic Charge relay system. N-linked (GlcNAc...) asparagine glycosylation is found at N644, N654, N725, and N755.

The protein belongs to the peptidase S8 family. Expressed in roots, leaves, stems, flower buds, developing siliques and mature seeds.

It is found in the secreted. It localises to the cell wall. Functionally, serine protease that cleaves the pectin methylesterase 17 (PME17) protein to release the PME17 mature form in the apoplasm. The polypeptide is Subtilisin-like protease SBT3.5 (Arabidopsis thaliana (Mouse-ear cress)).